A 370-amino-acid chain; its full sequence is Glutamate 5-kinase (370 aa).

Lys-12 provides a ligand contact to ATP. Ser-52, Asp-139, and Asn-151 together coordinate substrate. Residues 171–172 (SD) and 213–219 (TGGMFTK) each bind ATP. Positions 278–356 (QAHIAVDAGA…SDIESILGYS (79 aa)) constitute a PUA domain.

Belongs to the glutamate 5-kinase family.

It localises to the cytoplasm. It carries out the reaction L-glutamate + ATP = L-glutamyl 5-phosphate + ADP. The protein operates within amino-acid biosynthesis; L-proline biosynthesis; L-glutamate 5-semialdehyde from L-glutamate: step 1/2. Functionally, catalyzes the transfer of a phosphate group to glutamate to form L-glutamate 5-phosphate. This Herpetosiphon aurantiacus (strain ATCC 23779 / DSM 785 / 114-95) protein is Glutamate 5-kinase.